Consider the following 273-residue polypeptide: Phycobilisome 32.1 kDa linker polypeptide, phycocyanin-associated, rod 2 (273 aa).

Residues 1-180 (MTSLVSAQRL…VYRGYATSDR (180 aa)) form the PBS-linker domain. Residues 220 to 273 (NQMYRLQVIQGAAPGRGTRVRRGKAEYLVSYDNLSAKLQQINRQGDTVTMISLA) enclose the CpcD-like domain.

Belongs to the phycobilisome linker protein family. In terms of assembly, part of 2 PBS rod complexes, the conventional CpcG-PBS rod and a photosystem I-specific CpcL-PBS rod, both of which include ferredoxin--NADP reductase (petH). CpcG-PBS has on average 3 stacked phycocyanin hexamers (PC, CpcA and CpcB). Linker CpcG connects the PC stack to the thylakoid, the hexamers are linked by 1 copy of CpcC1, 1 copy of CpcC2 and the stack is terminated by a single copy of CpcD. The CpcL-PBS has on average 5 stacked phycocyanin hexamers (PC, CpcA and CpcB). Linker CpcL connects the PC stack to the thylakoid, the hexamers are linked by 1 copy of CpcC1, 3 copies of CpcC2 and the stack is terminated by a single copy of CpcD. Interacts with the C-phycocyanin (PC) beta subunit (cpcB), it may fit into the center of the PC hexamer.

It localises to the cellular thylakoid membrane. Functionally, rod linker protein, associated with phycocyanin. Linker polypeptides determine the state of aggregation and the location of the disk-shaped phycobiliprotein units within the phycobilisome and modulate their spectroscopic properties in order to mediate a directed and optimal energy transfer. This is Phycobilisome 32.1 kDa linker polypeptide, phycocyanin-associated, rod 2 (cpcC2) from Synechocystis sp. (strain ATCC 27184 / PCC 6803 / Kazusa).